The following is a 752-amino-acid chain: MAPAVAVVAAAAAFPFRLFSAEARRNTKGSRSKRGSARPLKPSPPPRPSASSSAAGGGGATTFTRLPLRNAPASVEVTLDRFPTANPEPRASTFTRRNGERLGDDEEDEEEEEDEVELGLRGATTFARLPLRDSPDGGDLTIGHFDAGVAPQEGLRSRAISRQLVEHLDDVEEEEEEQVVSRLDIFEGAKGREARAFLPDEDDEDDDVVVFDPEYDGYSDDEEFVATAVEQSPRGDAIAVAELEKLKYDNDDDDDDDDEVVVFHPDDDEEVDVFEDYDDDEEEETKEKGVPAVMRCFDTAKIYAKAGDGGNGVVAFRREKYVPLGGPSGGDGGRGGNVFVEVDGDMNSLLPFRKSVHFRAGRGAHGQGRQQAGAKGDDVVVKVPPGTVVRSAAGDVELLELMRPGQRALLLPGGRGGRGNAAFKSGTNKAPRIAEKGEKGPEMWIDLELKLVADVGIVGAPNAGKSTLLTAISAAKPTIANYPFTTLLPNLGVVSLDFDATMVVADLPGLLEGAHRGYGLGHEFLRHSERCSVLVHVVDGSGEQPEYEFEAVRLELELFSPSLVDKPYIVVYNKMDLPEASERWNKFQEKLQAEGIEPYCISAMNRQGTEDVVLAAYKVLQKDRQRMKDDEEWNGPENLNHVADAIKRERRAPMNEFEIFHDKGTNTWNVVGAGIERFVQMTNWQYSESLKRFQHALEACGVNKTLIKRGVKEGDTVVVGEMEMVWTDEPSKTRSSKTMNSKDDSVRWPEFG.

Residues M1–R90 constitute a chloroplast transit peptide. Positions F19–R121 are disordered. The segment covering N26–S36 has biased composition (basic residues). A compositionally biased stretch (acidic residues) spans G103–E117. An Obg domain is found at M294–V452. An OBG-type G domain is found at A453 to Q621. GTP is bound by residues G459 to S466, F484 to L488, D506 to G509, N573 to D576, and S602 to M604. Residues S466 and T486 each coordinate Mg(2+). The OCT domain maps to E649–D728. A disordered region spans residues D728–G752. Positions N740 to G752 are enriched in basic and acidic residues.

This sequence belongs to the TRAFAC class OBG-HflX-like GTPase superfamily. OBG GTPase family. Mg(2+) serves as cofactor.

It is found in the plastid. The protein localises to the chloroplast. Its function is as follows. Probable GTP-binding protein that may play a role in chloroplast development. The polypeptide is Probable GTP-binding protein OBGC1, chloroplastic (OBGC1) (Oryza sativa subsp. indica (Rice)).